Here is a 283-residue protein sequence, read N- to C-terminus: Nucleotide-binding protein DR_1434 (283 aa).

Position 8–15 (8–15) interacts with ATP; that stretch reads GLSGSGKS. GTP is bound at residue 57–60; it reads DTRT.

This sequence belongs to the RapZ-like family.

In terms of biological role, displays ATPase and GTPase activities. This Deinococcus radiodurans (strain ATCC 13939 / DSM 20539 / JCM 16871 / CCUG 27074 / LMG 4051 / NBRC 15346 / NCIMB 9279 / VKM B-1422 / R1) protein is Nucleotide-binding protein DR_1434.